Here is a 686-residue protein sequence, read N- to C-terminus: Catalase-2 (686 aa).

Residues 1–27 (MSDDQNKRVNEHSKDEQLEQYRTDNSG) show a composition bias toward basic and acidic residues. The segment at 1 to 43 (MSDDQNKRVNEHSKDEQLEQYRTDNSGKKMTTNQGLRVSEDEH) is disordered. Active-site residues include histidine 78 and asparagine 151. A heme-binding site is contributed by tyrosine 365.

Belongs to the catalase family. HPII subfamily. It depends on heme as a cofactor.

The enzyme catalyses 2 H2O2 = O2 + 2 H2O. Functionally, decomposes hydrogen peroxide into water and oxygen; serves to protect cells from the toxic effects of hydrogen peroxide. Involved in sporulation. The protein is Catalase-2 (katE) of Bacillus subtilis (strain 168).